A 364-amino-acid polypeptide reads, in one-letter code: Chorismate synthase (364 aa).

2 residues coordinate NADP(+): arginine 47 and arginine 53. FMN contacts are provided by residues 124-126 (RSS), glycine 286, 301-305 (KPTAT), and arginine 327.

It belongs to the chorismate synthase family. In terms of assembly, homotetramer. Requires FMNH2 as cofactor.

It carries out the reaction 5-O-(1-carboxyvinyl)-3-phosphoshikimate = chorismate + phosphate. It participates in metabolic intermediate biosynthesis; chorismate biosynthesis; chorismate from D-erythrose 4-phosphate and phosphoenolpyruvate: step 7/7. Functionally, catalyzes the anti-1,4-elimination of the C-3 phosphate and the C-6 proR hydrogen from 5-enolpyruvylshikimate-3-phosphate (EPSP) to yield chorismate, which is the branch point compound that serves as the starting substrate for the three terminal pathways of aromatic amino acid biosynthesis. This reaction introduces a second double bond into the aromatic ring system. This is Chorismate synthase from Acaryochloris marina (strain MBIC 11017).